A 353-amino-acid polypeptide reads, in one-letter code: Transcription termination/antitermination protein NusG (353 aa).

The 35-residue stretch at 301–335 (VGDMVKIISGPFEDFAGVIKEIDPERQELKVNVTI) folds into the KOW domain.

This sequence belongs to the NusG family.

With respect to regulation, regulated by autoinhibition via interaction of the N-terminal and the C-terminal domains. Autoinhibition may prevent NusG from interacting prematurely with other components of the transcription complex or non-specific interactions with other cellular components. In terms of biological role, participates in transcription elongation, termination and antitermination. In Thermotoga maritima (strain ATCC 43589 / DSM 3109 / JCM 10099 / NBRC 100826 / MSB8), this protein is Transcription termination/antitermination protein NusG.